A 1216-amino-acid chain; its full sequence is Protein WWC3 (1216 aa).

The interval 1 to 63 (MPWLSGGRRR…RESAELPLPA (63 aa)) is disordered. Positions 21 to 51 (EPPPSAQPQREPPPAPPAAVPTPPAPSAPPP) are enriched in pro residues. WW domains follow at residues 59–92 (LPLP…DPRD) and 106–139 (DELP…DPRE). 2 coiled-coil regions span residues 164–250 (KEIY…TLQE) and 354–468 (DRVR…EATR). 3 disordered regions span residues 487-508 (VSSG…SSRG), 546-612 (GRDA…ADSC), and 634-668 (DLPG…VGGT). Residues 570–598 (PQSLASLSSRSSLSSLSPPSSPLDTPFLP) are compositionally biased toward low complexity. Residues 722-847 (SNGDPQIHVG…SLSEMQLRWH (126 aa)) form the C2 domain. A coiled-coil region spans residues 885 to 936 (DAVTVLLARTTAQLQAVERELAEERAKLEYTEEEVLEMERKEEQAEAISERS). Residues 1060–1079 (SPFVRNTLERRTLRYKQSCR) are interaction with PRKCZ. Positions 1091–1160 (LDLELDLQAS…RQTRQTKLDY (70 aa)) form a coiled coil.

The protein belongs to the WWC family. As to quaternary structure, forms homodimers and heterodimers with WWC1 and WWC2. Interacts with DLC1 and PRKCZ. Interacts (via WW domains) with LATS1 and LATS2.

The protein localises to the cytoplasm. The protein resides in the cytosol. Regulator of the Hippo signaling pathway, also known as the Salvador-Warts-Hippo (SWH) pathway. Enhances phosphorylation of LATS1 and YAP1 and negatively regulates cell proliferation and organ growth due to a suppression of the transcriptional activity of YAP1, the major effector of the Hippo pathway. The sequence is that of Protein WWC3 from Homo sapiens (Human).